Consider the following 748-residue polypeptide: Formate acetyltransferase (748 aa).

The region spanning 5–618 (NNHTNAWQGF…KTGNTPDGRK (614 aa)) is the PFL domain. The active-site S-acetylcysteine intermediate is the cysteine 412. The active-site Cysteine radical intermediate is the cysteine 413. The region spanning 625 to 748 (PGANPMHGRD…VISRTFHESM (124 aa)) is the Glycine radical domain. Glycine 723 is modified (glycine radical).

Belongs to the glycyl radical enzyme (GRE) family. PFL subfamily. In terms of assembly, homodimer.

The protein localises to the cytoplasm. It catalyses the reaction formate + acetyl-CoA = pyruvate + CoA. It functions in the pathway fermentation; pyruvate fermentation; formate from pyruvate: step 1/1. In terms of biological role, catalyzes the conversion of pyruvate to formate and acetyl-CoA. In Staphylococcus epidermidis (strain ATCC 12228 / FDA PCI 1200), this protein is Formate acetyltransferase (pflB).